The following is a 1029-amino-acid chain: Chitin synthase 2 (1029 aa).

3 disordered regions span residues 1–160 (MDRP…GARS), 174–216 (SDVD…SHLR), and 234–257 (AHYG…QKSR). A compositionally biased stretch (low complexity) spans 61–77 (PSVSSIHSRPSSISNIP). A compositionally biased stretch (basic and acidic residues) spans 244 to 257 (DQQRRGVREPQKSR). N-linked (GlcNAc...) asparagine glycosylation is present at Asn348. A run of 8 helical transmembrane segments spans residues 639–659 (WLNG…QLWA), 681–701 (VLFT…VAGG), 716–736 (LYIF…QFIL), 752–772 (SMVI…YIVI), 791–811 (NLIV…FIYL), 820–840 (SIQY…YAFC), 918–938 (YMVV…SEIY), and 952–972 (ILWS…TFAI).

This sequence belongs to the chitin synthase family. Class II subfamily.

The protein localises to the cell membrane. It catalyses the reaction [(1-&gt;4)-N-acetyl-beta-D-glucosaminyl](n) + UDP-N-acetyl-alpha-D-glucosamine = [(1-&gt;4)-N-acetyl-beta-D-glucosaminyl](n+1) + UDP + H(+). In terms of biological role, polymerizes chitin, a structural polymer of the cell wall and septum, by transferring the sugar moiety of UDP-GlcNAc to the non-reducing end of the growing chitin polymer. Plays an important role in cell wall integrity and has distinct functions in invasive hyphae and vegetative hyphae, but is not involved in plant infection. The chain is Chitin synthase 2 from Pyricularia oryzae (strain 70-15 / ATCC MYA-4617 / FGSC 8958) (Rice blast fungus).